We begin with the raw amino-acid sequence, 130 residues long: uncharacterized protein (130 aa).

A disordered region spans residues 1 to 62; the sequence is MRMYSSDAHE…ASGVGSSCKR (62 aa). Residues 21-30 show a composition bias toward pro residues; that stretch reads PPHPLPPTGS.

This is an uncharacterized protein from Homo sapiens (Human).